A 616-amino-acid chain; its full sequence is MDIYITKGITNPNYPGFQKFAHTLSDDYIEYSDMECNESDLTDSDREDDPTFPSKMAKESGSETFKNGQDSILSNCDNGNTYISEEESVNRSENIPDIVNENYSATSENSKRALQKPDLIYNLSQNYTTNPEFPSWSCTINSKYEGQLQGQSPIDIVGDFGGEVEREFELLLTGYKNKKEADELKGSNLDKICDAELSNGTEALKQTSSTRLSGNSTRKNKKKNTPYGHQIVKTKHPKPSHDERQLPPDTFDYKTYSQRKYIICDADQYSSVPEKNKNDSPNLNQAEIPNMSSLEIGGSGSQQNLDEDNNKVASRKYSNQSRWSQYLEDPIKYSKDPCSTMVLEQFDAYKIANDMDVETLQNHYKKVKQIEKKRRFNRDEIRKRLAIGDKDSLNNDIKKEEFLTGSDNESYSSDSETCPKLSSGVLRKQSEFCETKRNKEFENDKIFQKNQINQDKSMNHMNGNPIGTTDYPSDENLFFFANQSKLQIEVRIALAQSKEIAQMKVKARKHGVTPIVDVIRSMLCDVGIKMNSNHRWISRQLLTGIQVPTLQLLVNNLQEYIENLNVTLLESLKERDDLNSDQDDILHDLEKINNFFVFQQQSGQQVNKIVRHGHLD.

The segment covering 38-50 (ESDLTDSDREDDP) has biased composition (acidic residues). Disordered stretches follow at residues 38–71 (ESDL…GQDS), 204–251 (LKQT…PDTF), and 292–320 (SSLE…YSNQ). Polar residues-rich tracts occupy residues 62–71 (SETFKNGQDS) and 204–217 (LKQT…GNST). Residues 550 to 594 (LQLLVNNLQEYIENLNVTLLESLKERDDLNSDQDDILHDLEKINN) are a coiled coil.

This sequence belongs to the SCHIP1 family. As to quaternary structure, interacts with ex; the interaction results in recruitment of Schip1 to the apical cell membrane. Interacts with Tao; the interaction enhances Tao kinase activity. Interacts with Mer. In eye disks of the third instar larvae, expressed in all cells (at protein level).

The protein localises to the cell junction. It localises to the adherens junction. Its subcellular location is the apical cell membrane. In terms of biological role, regulator of the Hippo/SWH (Sav/Wts/Hpo) signaling pathway, a signaling pathway that plays a pivotal role in organ size control and tumor suppression by restricting proliferation and promoting apoptosis. The core of this pathway is composed of a kinase cascade wherein Hippo (hpo), in complex with its regulatory protein Salvador (sav), phosphorylates and activates Warts (wts) in complex with its regulatory protein Mats, which in turn phosphorylates and inactivates the Yorkie (yki) oncoprotein. Schip1 promotes kinase activity of Tao and enhances phosphorylation of hpo by Tao. The chain is Schwannomin-interacting protein 1 homolog from Drosophila melanogaster (Fruit fly).